The sequence spans 81 residues: Costars family protein ABRACL (81 aa).

M1 carries the post-translational modification N-acetylmethionine.

The protein belongs to the costars family.

The sequence is that of Costars family protein ABRACL (Abracl) from Mus musculus (Mouse).